The primary structure comprises 104 residues: Nucleoid-associated protein GAU_1113 (104 aa).

This sequence belongs to the YbaB/EbfC family. As to quaternary structure, homodimer.

Its subcellular location is the cytoplasm. It is found in the nucleoid. Functionally, binds to DNA and alters its conformation. May be involved in regulation of gene expression, nucleoid organization and DNA protection. This chain is Nucleoid-associated protein GAU_1113, found in Gemmatimonas aurantiaca (strain DSM 14586 / JCM 11422 / NBRC 100505 / T-27).